Consider the following 437-residue polypeptide: Ribosomal protein uS12 methylthiotransferase RimO (437 aa).

The region spanning 9–125 (PAIFLLSLGC…VLAAIGAHYC (117 aa)) is the MTTase N-terminal domain. [4Fe-4S] cluster contacts are provided by cysteine 18, cysteine 54, cysteine 88, cysteine 149, cysteine 153, and cysteine 156. The Radical SAM core domain maps to 135-364 (LTPPHYAFLK…MELQESIAAS (230 aa)). Residues 367-434 (RKLEGQTLTV…AYELFGRVGS (68 aa)) enclose the TRAM domain.

Belongs to the methylthiotransferase family. RimO subfamily. [4Fe-4S] cluster is required as a cofactor.

The protein localises to the cytoplasm. The catalysed reaction is L-aspartate(89)-[ribosomal protein uS12]-hydrogen + (sulfur carrier)-SH + AH2 + 2 S-adenosyl-L-methionine = 3-methylsulfanyl-L-aspartate(89)-[ribosomal protein uS12]-hydrogen + (sulfur carrier)-H + 5'-deoxyadenosine + L-methionine + A + S-adenosyl-L-homocysteine + 2 H(+). Catalyzes the methylthiolation of an aspartic acid residue of ribosomal protein uS12. This chain is Ribosomal protein uS12 methylthiotransferase RimO, found in Chlorobaculum parvum (strain DSM 263 / NCIMB 8327) (Chlorobium vibrioforme subsp. thiosulfatophilum).